A 147-amino-acid polypeptide reads, in one-letter code: Peptide deformylase 1 (147 aa).

The Fe cation site is built by Cys-90 and His-132. Glu-133 is an active-site residue. Fe cation is bound at residue His-136.

The protein belongs to the polypeptide deformylase family. Requires Fe(2+) as cofactor.

The enzyme catalyses N-terminal N-formyl-L-methionyl-[peptide] + H2O = N-terminal L-methionyl-[peptide] + formate. Its function is as follows. Removes the formyl group from the N-terminal Met of newly synthesized proteins. Requires at least a dipeptide for an efficient rate of reaction. N-terminal L-methionine is a prerequisite for activity but the enzyme has broad specificity at other positions. This is Peptide deformylase 1 from Clostridium perfringens (strain 13 / Type A).